We begin with the raw amino-acid sequence, 398 residues long: Elongation factor Tu (398 aa).

Positions 10–207 (KPHVNIGTIG…TVDEYIPEPE (198 aa)) constitute a tr-type G domain. The G1 stretch occupies residues 19 to 26 (GHVDHGKT). 19 to 26 (GHVDHGKT) is a binding site for GTP. Threonine 26 contributes to the Mg(2+) binding site. Residues 63-67 (GITIN) are G2. The tract at residues 84 to 87 (DAPG) is G3. GTP-binding positions include 84 to 88 (DAPGH) and 139 to 142 (NKVD). The tract at residues 139-142 (NKVD) is G4. The tract at residues 177–179 (SAL) is G5.

It belongs to the TRAFAC class translation factor GTPase superfamily. Classic translation factor GTPase family. EF-Tu/EF-1A subfamily. Monomer.

The protein resides in the cytoplasm. It carries out the reaction GTP + H2O = GDP + phosphate + H(+). GTP hydrolase that promotes the GTP-dependent binding of aminoacyl-tRNA to the A-site of ribosomes during protein biosynthesis. The chain is Elongation factor Tu from Streptococcus agalactiae serotype Ia (strain ATCC 27591 / A909 / CDC SS700).